A 1052-amino-acid polypeptide reads, in one-letter code: Membrane-bound transcription factor site-1 protease (1052 aa).

Residues 1–17 form the signal peptide; sequence MKLINIWLLLLVVLLCG. The propeptide occupies 18-186; sequence KKHLGDRLGK…TGRHSSRRLL (169 aa). An N-linked (GlcNAc...) asparagine glycan is attached at asparagine 148. Serine 168 carries the post-translational modification Phosphoserine. Residues 187–999 lie on the Lumenal side of the membrane; sequence RAIPRQVAQT…MPGRYNQEVG (813 aa). In terms of domain architecture, Peptidase S8 spans 190-472; that stretch reads PRQVAQTLQA…HGKLDLLRAY (283 aa). Aspartate 218 serves as the catalytic Charge relay system. Asparagine 236 carries N-linked (GlcNAc...) asparagine glycosylation. Histidine 249 (charge relay system) is an active-site residue. Asparagine 305 is a glycosylation site (N-linked (GlcNAc...) asparagine). Residue serine 414 is the Charge relay system of the active site. N-linked (GlcNAc...) asparagine glycans are attached at residues asparagine 515 and asparagine 728. Over residues 877-887 the composition is skewed to polar residues; the sequence is PSLSHSGNRQR. Positions 877–900 are disordered; that stretch reads PSLSHSGNRQRPPSGAGLAPPERM. A glycan (N-linked (GlcNAc...) asparagine) is linked at asparagine 939. Residues 1000-1022 traverse the membrane as a helical segment; it reads QTIPVFAFLGAMVALAFFVVQIS. The Cytoplasmic segment spans residues 1023 to 1052; it reads KAKSRPKRRRPRAKRPQLTQQTHPPRTPSV. The span at 1025-1037 shows a compositional bias: basic residues; it reads KSRPKRRRPRAKR. The segment at 1025–1052 is disordered; it reads KSRPKRRRPRAKRPQLTQQTHPPRTPSV.

This sequence belongs to the peptidase S8 family. Requires Ca(2+) as cofactor. Post-translationally, the 148 kDa zymogen is processed progressively into two membrane-bound 120 and 106 kDa forms in the endoplasmic reticulum, and late into a secreted 98 kDa form. The propeptide is autocatalytically removed through an intramolecular cleavage after Leu-186. Further cleavage generates 14, 10, and 8 kDa intermediates.

It is found in the endoplasmic reticulum membrane. The protein resides in the golgi apparatus membrane. The enzyme catalyses Processes precursors containing basic and hydrophobic/aliphatic residues at P4 and P2, respectively, with a relatively relaxed acceptance of amino acids at P1 and P3.. With respect to regulation, inhibited by divalent copper and zinc ions, but not by nickel or cobalt. Inhibited by its prosegment, but not smaller fragments. Inhibited by 4-(2-aminoethyl)benzenesulfonyl fluoride (AEBSF), a serine protease inhibitor. Its function is as follows. Serine protease that cleaves after hydrophobic or small residues, provided that Arg or Lys is in position P4: known substrates include SREBF1/SREBP1, SREBF2/SREBP2, BDNF, GNPTAB, ATF6, ATF6B and FAM20C. Cleaves substrates after Arg-Ser-Val-Leu (SREBP2), Arg-His-Leu-Leu (ATF6), Arg-Gly-Leu-Thr (BDNF) and its own propeptide after Arg-Arg-Leu-Leu. Catalyzes the first step in the proteolytic activation of the sterol regulatory element-binding proteins (SREBPs) SREBF1/SREBP1 and SREBF2/SREBP2. Also mediates the first step in the proteolytic activation of the cyclic AMP-dependent transcription factor ATF-6 (ATF6 and ATF6B). Mediates the protein cleavage of GNPTAB into subunit alpha and beta, thereby participating in biogenesis of lysosomes. Cleaves the propeptide from FAM20C which is required for FAM20C secretion from the Golgi apparatus membrane and for enhancement of FAM20C kinase activity, promoting osteoblast differentiation and biomineralization. Involved in the regulation of M6P-dependent Golgi-to-lysosome trafficking of lysosomal enzymes. It is required for the activation of CREB3L2/BBF2H7, a transcriptional activator of MIA3/TANGO and other genes controlling mega vesicle formation. Therefore, it plays a key role in the regulation of mega vesicle-mediated collagen trafficking. In astrocytes and osteoblasts, upon DNA damage and ER stress, mediates the first step of the regulated intramembrane proteolytic activation of the transcription factor CREB3L1, leading to the inhibition of cell-cycle progression. The protein is Membrane-bound transcription factor site-1 protease of Cricetulus griseus (Chinese hamster).